The chain runs to 532 residues: Drimenyl diphosphate synthase (532 aa).

(2E,6E)-farnesyl diphosphate is bound by residues arginine 121, lysine 122, glutamine 152, and tryptophan 154. Position 158 (glutamate 158) interacts with Mg(2+). 4 PFTB repeats span residues 275-317 (PAAM…RVAG), 325-367 (IAAA…APNP), 428-469 (KRQA…SRDG), and 475-518 (LARA…CVLL). Aspartate 304 (proton donor) is an active-site residue. Arginine 502 contributes to the (2E,6E)-farnesyl diphosphate binding site.

The protein belongs to the terpene cyclase/mutase family. It depends on Mg(2+) as a cofactor. Ni(2+) is required as a cofactor. Requires Co(2+) as cofactor.

It catalyses the reaction (2E,6E)-farnesyl diphosphate = (5S,9S,10S)-drim-7-en-11-yl diphosphate. Catalyzes the cyclization of farnesyl diphosphate (FPP) to drimenyl diphosphate. The chain is Drimenyl diphosphate synthase from Streptantibioticus cattleyicolor (strain ATCC 35852 / DSM 46488 / JCM 4925 / NBRC 14057 / NRRL 8057) (Streptomyces cattleya).